Reading from the N-terminus, the 92-residue chain is Endoribonuclease VapD homolog (92 aa).

This sequence belongs to the VapD ribonuclease family. In terms of assembly, homodimer.

Functionally, cleaves ssRNA, mostly between U:A. The protein is Endoribonuclease VapD homolog of Neisseria gonorrhoeae.